The following is a 314-amino-acid chain: uncharacterized protein (314 aa).

The signal sequence occupies residues 1-20; sequence MKKRAGIWAALLLAAVMLAG. Residue Cys-21 is the site of N-palmitoyl cysteine attachment. The S-diacylglycerol cysteine moiety is linked to residue Cys-21. The Fe/B12 periplasmic-binding domain occupies 59–311; sequence KIVSLMPSNT…ELAESIYPDT (253 aa).

Belongs to the bacterial solute-binding protein 8 family. The complex is composed of two ATP-binding proteins (YvrA), two transmembrane proteins (YvrB) and a solute-binding protein (YvrC).

It localises to the cell membrane. Probably part of an ABC transporter complex. This is an uncharacterized protein from Bacillus subtilis (strain 168).